Here is a 1332-residue protein sequence, read N- to C-terminus: DNA-directed RNA polymerase subunit beta' (1332 aa).

Residues Cys-60, Cys-62, Cys-75, and Cys-78 each coordinate Zn(2+). Asp-535, Asp-537, and Asp-539 together coordinate Mg(2+). Zn(2+) is bound by residues Cys-894, Cys-977, Cys-984, and Cys-987.

The protein belongs to the RNA polymerase beta' chain family. As to quaternary structure, the RNAP catalytic core consists of 2 alpha, 1 beta, 1 beta' and 1 omega subunit. When a sigma factor is associated with the core the holoenzyme is formed, which can initiate transcription. Mg(2+) is required as a cofactor. Zn(2+) serves as cofactor.

It carries out the reaction RNA(n) + a ribonucleoside 5'-triphosphate = RNA(n+1) + diphosphate. Its function is as follows. DNA-dependent RNA polymerase catalyzes the transcription of DNA into RNA using the four ribonucleoside triphosphates as substrates. The polypeptide is DNA-directed RNA polymerase subunit beta' (Corynebacterium kroppenstedtii (strain DSM 44385 / JCM 11950 / CIP 105744 / CCUG 35717)).